The sequence spans 245 residues: UPF0246 protein LBUL_1917 (245 aa).

Belongs to the UPF0246 family.

The polypeptide is UPF0246 protein LBUL_1917 (Lactobacillus delbrueckii subsp. bulgaricus (strain ATCC BAA-365 / Lb-18)).